Consider the following 131-residue polypeptide: Translation initiation factor 5A (131 aa).

Lys-37 carries the post-translational modification Hypusine.

This sequence belongs to the eIF-5A family.

Its subcellular location is the cytoplasm. Functionally, functions by promoting the formation of the first peptide bond. The polypeptide is Translation initiation factor 5A (eIF5A) (Methanococcus maripaludis (strain C6 / ATCC BAA-1332)).